A 28-amino-acid chain; its full sequence is GFLDVLKGVGKAALGAVTHHINNLVNQQ.

As to expression, expressed by the skin glands.

The protein localises to the secreted. Has antimicrobial activity. This chain is Cruzioseptin-10, found in Cruziohyla calcarifer (Splendid leaf frog).